Here is a 348-residue protein sequence, read N- to C-terminus: Protein disulfide isomerase CRELD2 (348 aa).

The N-terminal stretch at 1-22 is a signal peptide; the sequence is MHLPPAAAVGLLLLLLPPPARV. Positions 30–33 match the CXXC motif; it reads CQRC. 4 disulfides stabilise this stretch: C30–C33, C139–C153, C147–C165, and C167–C176. In terms of domain architecture, EGF-like 1 spans 135–177; sequence DCQECQGGSQRPCSGNGHCDGDGSRQGDGSCQCHVGYKGPLCI. The stretch at 192–239 is one FU 1 repeat; sequence HSFCTACDESCKTCSGPTNKGCVECEVGWTRVEDACVDVDECAAETPP. A glycan (N-linked (GlcNAc...) asparagine) is linked at N250. Residues 252 to 299 form an FU 2 repeat; that stretch reads SYTCEECDSTCVGCTGKGPANCKECISGYSKQKGECADIDECSLETKV. The CXXC signature appears at 262 to 265; the sequence is CVGC. 4 disulfides stabilise this stretch: C262–C265, C293–C307, C300–C316, and C318–C328. In terms of domain architecture, EGF-like 2; calcium-binding spans 289-329; the sequence is DIDECSLETKVCKKENENCYNTPGSFVCVCPEGFEEDRRCL.

This sequence belongs to the CRELD family. In terms of assembly, interacts with CHRNA4. Component of a complex containing at least CRELD2, MANF, MATN3 and PDIA4.

The protein localises to the endoplasmic reticulum. The enzyme catalyses Catalyzes the rearrangement of -S-S- bonds in proteins.. Protein disulfide isomerase. Might play a role in the unfolded protein response. May regulate transport of alpha4-beta2 neuronal acetylcholine receptor. The sequence is that of Protein disulfide isomerase CRELD2 (CRELD2) from Cricetulus griseus (Chinese hamster).